An 806-amino-acid chain; its full sequence is Hyperosmolality-gated Ca2+ permeable channel 1.8 (806 aa).

10 consecutive transmembrane segments (helical) span residues 7–27 (IGVSALINLFGAFLFLIAFAV), 102–122 (IYTLGLKIFAPVMVLALVVLV), 157–177 (KFFFHIAVEYIFTFWACFMLY), 375–395 (LVIGVSVFALVFFYMIPIAFV), 427–447 (FLPGLALKIFLWILPTVLLIM), 467–487 (YYYFMLVNVFLGSIIAGTAFE), 512–532 (ATFFITYIMVDGWAGIAGEIL), 576–596 (FLLGIVYTAVTPILLPFILIF), 626–646 (VHGRIIASLLISQLLLMGLLA), and 650–670 (AADSTPLLIILPILTLSFHKY). The tract at residues 726–786 (SSSSSSEKET…HYASAYEQSS (61 aa)) is disordered. Positions 731 to 750 (SEKETHQEETPEVRVDKHET) are enriched in basic and acidic residues. Threonine 735 carries the phosphothreonine modification. The span at 751–762 (QSSSPVTELGTS) shows a compositional bias: polar residues. The segment covering 775-786 (SSHYASAYEQSS) has biased composition (low complexity).

This sequence belongs to the CSC1 (TC 1.A.17) family.

The protein resides in the golgi apparatus membrane. It localises to the cell membrane. Acts as an osmosensitive calcium-permeable cation channel. This is Hyperosmolality-gated Ca2+ permeable channel 1.8 from Arabidopsis thaliana (Mouse-ear cress).